Reading from the N-terminus, the 141-residue chain is Hemoglobin D subunit alpha (141 aa).

The Globin domain maps to 1 to 141 (MLTEDDKQLI…VSAVLAEKYR (141 aa)). His58 lines the O2 pocket. Position 87 (His87) interacts with heme b.

It belongs to the globin family. In terms of assembly, tetramer of two alpha chains and two beta chains. In terms of tissue distribution, red blood cells.

Functionally, involved in oxygen transport from the lung to the various peripheral tissues. This Aldabrachelys gigantea (Aldabra giant tortoise) protein is Hemoglobin D subunit alpha.